The sequence spans 309 residues: tRNA uridine(34) hydroxylase (309 aa).

The region spanning 123-217 is the Rhodanese domain; the sequence is DDPEVIVVDT…YLEEVPEEQT (95 aa). Cys177 (cysteine persulfide intermediate) is an active-site residue.

It belongs to the TrhO family.

The catalysed reaction is uridine(34) in tRNA + AH2 + O2 = 5-hydroxyuridine(34) in tRNA + A + H2O. Catalyzes oxygen-dependent 5-hydroxyuridine (ho5U) modification at position 34 in tRNAs. The sequence is that of tRNA uridine(34) hydroxylase from Saccharophagus degradans (strain 2-40 / ATCC 43961 / DSM 17024).